The chain runs to 242 residues: UPF0246 protein SP_1547 (242 aa).

This sequence belongs to the UPF0246 family.

This Streptococcus pneumoniae serotype 4 (strain ATCC BAA-334 / TIGR4) protein is UPF0246 protein SP_1547.